We begin with the raw amino-acid sequence, 263 residues long: Small ribosomal subunit protein eS4 (263 aa).

Positions 42–104 constitute an S4 RNA-binding domain; sequence LPLIIFLRNR…TGEHFRLVYD (63 aa).

This sequence belongs to the eukaryotic ribosomal protein eS4 family.

The sequence is that of Small ribosomal subunit protein eS4 (RPS4) from Gallus gallus (Chicken).